The sequence spans 65 residues: Light-harvesting protein B800/830/1020 beta-2 chain (65 aa).

Residues 1–17 (TDIRTGLTDEECQEIHE) lie on the Cytoplasmic side of the membrane. Residues histidine 16 and asparagine 34 each coordinate a bacteriochlorophyll. A helical transmembrane segment spans residues 18–40 (MNMLGMHAYWSIGLIANALAYAW). At 41–65 (RPFHQGRAGNRLEDHAPDYVRSALT) the chain is on the periplasmic side.

Belongs to the antenna complex beta subunit family. In terms of assembly, the core complex is formed by different alpha and beta chains, binding bacteriochlorophyll molecules, and arranged most probably in tetrameric structures disposed around the reaction center. The non-pigmented gamma chains may constitute additional components.

It localises to the cell inner membrane. Antenna complexes are light-harvesting systems, which transfer the excitation energy to the reaction centers. The polypeptide is Light-harvesting protein B800/830/1020 beta-2 chain (Halorhodospira halochloris (Ectothiorhodospira halochloris)).